The sequence spans 342 residues: Phosphate acyltransferase (342 aa).

The protein belongs to the PlsX family. As to quaternary structure, homodimer. Probably interacts with PlsY.

Its subcellular location is the cytoplasm. The enzyme catalyses a fatty acyl-[ACP] + phosphate = an acyl phosphate + holo-[ACP]. It functions in the pathway lipid metabolism; phospholipid metabolism. Catalyzes the reversible formation of acyl-phosphate (acyl-PO(4)) from acyl-[acyl-carrier-protein] (acyl-ACP). This enzyme utilizes acyl-ACP as fatty acyl donor, but not acyl-CoA. The polypeptide is Phosphate acyltransferase (Shewanella sp. (strain ANA-3)).